Reading from the N-terminus, the 84-residue chain is Large ribosomal subunit protein bL27c (84 aa).

The tract at residues 1 to 23 (MAHKKGAGSTKNGRDSNAKRLGV) is disordered.

It belongs to the bacterial ribosomal protein bL27 family.

Its subcellular location is the plastid. The protein resides in the chloroplast. The polypeptide is Large ribosomal subunit protein bL27c (Thalassiosira pseudonana (Marine diatom)).